The primary structure comprises 928 residues: Retinoblastoma-associated protein (928 aa).

Residues 1–42 (MPPKTPRKTAATAAAAAAEPPAPPPPPPPEEDPEQDSGPEDL) are disordered. N,N-dimethylproline is present on Pro-2. A compositionally biased stretch (low complexity) spans 8–19 (KTAATAAAAAAE). Residues 29 to 39 (PEEDPEQDSGP) show a composition bias toward acidic residues. Ser-37 is subject to Phosphoserine. At Ser-249 the chain carries Phosphoserine; by CDK1. Position 252 is a phosphothreonine; by CDK1 (Thr-252). Phosphothreonine is present on Thr-356. A Phosphothreonine; by CDK1 modification is found at Thr-373. A domain A region spans residues 373–579 (TPVRTVMNTI…FDLIKQSKDR (207 aa)). Residues 373-771 (TPVRTVMNTI…QRLKTNILQY (399 aa)) are pocket; binds T and E1A. At Ser-567 the chain carries Phosphoserine; by CDK2. The tract at residues 580–639 (EGPTDHLESACPLNLPLQNNHTAADMYLSPVRSPKKKGSTTRVNSTANAETQATSAFQTQ) is spacer. Ser-608 is modified (phosphoserine). Positions 610–632 (VRSPKKKGSTTRVNSTANAETQA) are disordered. A Phosphoserine; by CHEK2 and CHEK1 modification is found at Ser-612. Residues 619 to 632 (TTRVNSTANAETQA) are compositionally biased toward polar residues. The residue at position 624 (Ser-624) is a Phosphoserine. The tract at residues 640-771 (KPLKSTSLSL…QRLKTNILQY (132 aa)) is domain B. The interval 763-928 (RLKTNILQYA…SMDTSNKEEK (166 aa)) is interaction with LIMD1. Residues 771 to 928 (YASTRPPTLS…SMDTSNKEEK (158 aa)) are domain C; mediates interaction with E4F1. Phosphoserine is present on residues Ser-780, Ser-788, and Ser-795. A Phosphoserine; by CDK1 and CDK3 modification is found at Ser-807. At Lys-810 the chain carries N6-methyllysine; by SMYD2. Ser-811 bears the Phosphoserine; by CDK1 and CDK3 mark. A Phosphothreonine; by CDK6 modification is found at Thr-821. Position 823 is a phosphothreonine (Thr-823). Thr-826 bears the Phosphothreonine; by CDK4 mark. At Thr-841 the chain carries Phosphothreonine. Ser-855 bears the Phosphoserine mark. At Lys-860 the chain carries N6-methyllysine; by SMYD2. The Bipartite nuclear localization signal signature appears at 860–876 (KRSAEGSNPPKPLKKLR). Residues 860–928 (KRSAEGSNPP…SMDTSNKEEK (69 aa)) are disordered. N6-acetyllysine; by PCAF is present on residues Lys-873 and Lys-874. A compositionally biased stretch (basic and acidic residues) spans 915–928 (KMNDSMDTSNKEEK).

Belongs to the retinoblastoma protein (RB) family. As to quaternary structure, the hypophosphorylated form interacts with and sequesters the E2F1 transcription factor, thereby inhibiting E2F1 transcription. Interacts with heterodimeric E2F/DP transcription factor complexes containing TFDP1 and either E2F1, E2F3, E2F4 or E2F5, or TFDP2 and E2F4. Interacts (when hyperphosphorylated and hypophosphorylated) with PKP3; the interaction inhibits RB1 interaction with and repression of the transcription factor E2F1, potentially via sequestering RB1 to the cytoplasm. The unphosphorylated form interacts with EID1, ARID3B, KDM5A, SUV39H1, MJD2A/JHDM3A and THOC1. Interacts with the N-terminal domain of TAF1. Interacts with SNW1, ATAD5, AATF, DNMT1, LIN9, LMNA, KMT5B, KMT5C, PELP1, UHRF2 and TMPO-alpha. Interacts with GRIP1 and UBR4. Interacts with ARID4A and KDM5B. Interacts with E4F1 and LIMD1. Interacts with SMARCA4/BRG1 and HDAC1. Interacts with PSMA3 and USP4. Interacts (when methylated at Lys-860) with L3MBTL1. Interacts with CHEK2; phosphorylates RB1. Interacts with CDK1 and CDK2. Interacts with PRMT2. Interacts with CEBPA. P-TEFB complex interacts with RB1; promotes phosphorylation of RB1. Interacts with RBBP9; the interaction disrupts RB1 binding to E2F1. Interacts with KAT2B/PCAF and EP300/P300. Interacts with PAX5. Interacts (phosphorylated and unphosphorylated) with BLCAP. May interact with NDC80. In terms of assembly, (Microbial infection) Interacts with adenovirus E1A protein. (Microbial infection) Interacts with HPV E7 protein. As to quaternary structure, (Microbial infection) Interacts with SV40 large T antigen. In terms of assembly, (Microbial infection) Interacts with human cytomegalovirus/HHV-5 proteins UL82 and UL123. (Microbial infection) Interacts with molluscum contagiosum virus protein MC007. Phosphorylated by CDK6 and CDK4, and subsequently by CDK2 at Ser-567 in G1, thereby releasing E2F1 which is then able to activate cell growth. Dephosphorylated at the late M phase. SV40 large T antigen, HPV E7 and adenovirus E1A bind to the underphosphorylated, active form of pRb. Phosphorylation at Thr-821 and Thr-826 promotes interaction between the C-terminal domain C and the Pocket domain, and thereby inhibits interactions with heterodimeric E2F/DP transcription factor complexes. Dephosphorylated at Ser-795 by calcineruin upon calcium stimulation. CDK3/cyclin-C-mediated phosphorylation at Ser-807 and Ser-811 is required for G0-G1 transition. Phosphorylated by CDK1 and CDK2 upon TGFB1-mediated apoptosis. Post-translationally, N-terminus is methylated by METTL11A/NTM1. Monomethylation at Lys-810 by SMYD2 enhances phosphorylation at Ser-807 and Ser-811, and promotes cell cycle progression. Monomethylation at Lys-860 by SMYD2 promotes interaction with L3MBTL1. In terms of processing, acetylated during keratinocyte differentiation. Acetylation at Lys-873 and Lys-874 regulates subcellular localization. Can be deacetylated by SIRT1. Expressed in the retina. Expressed in foreskin keratinocytes (at protein level).

The protein localises to the nucleus. It is found in the cytoplasm. In terms of biological role, tumor suppressor that is a key regulator of the G1/S transition of the cell cycle. The hypophosphorylated form binds transcription regulators of the E2F family, preventing transcription of E2F-responsive genes. Both physically blocks E2Fs transactivating domain and recruits chromatin-modifying enzymes that actively repress transcription. Cyclin and CDK-dependent phosphorylation of RB1 induces its dissociation from E2Fs, thereby activating transcription of E2F responsive genes and triggering entry into S phase. RB1 also promotes the G0-G1 transition upon phosphorylation and activation by CDK3/cyclin-C. Directly involved in heterochromatin formation by maintaining overall chromatin structure and, in particular, that of constitutive heterochromatin by stabilizing histone methylation. Recruits and targets histone methyltransferases SUV39H1, KMT5B and KMT5C, leading to epigenetic transcriptional repression. Controls histone H4 'Lys-20' trimethylation. Inhibits the intrinsic kinase activity of TAF1. Mediates transcriptional repression by SMARCA4/BRG1 by recruiting a histone deacetylase (HDAC) complex to the c-FOS promoter. In resting neurons, transcription of the c-FOS promoter is inhibited by BRG1-dependent recruitment of a phospho-RB1-HDAC1 repressor complex. Upon calcium influx, RB1 is dephosphorylated by calcineurin, which leads to release of the repressor complex. (Microbial infection) In case of viral infections, interactions with SV40 large T antigen, HPV E7 protein or adenovirus E1A protein induce the disassembly of RB1-E2F1 complex thereby disrupting RB1's activity. This Homo sapiens (Human) protein is Retinoblastoma-associated protein (RB1).